A 298-amino-acid polypeptide reads, in one-letter code: Dioxygenase aneA (298 aa).

Residues H134, D136, and H213 each contribute to the Fe cation site.

Belongs to the PhyH family. As to quaternary structure, homodimer. The cofactor is Fe cation.

It carries out the reaction aculene D + 2-oxoglutarate + O2 = aculene C + succinate + CO2 + H2O. The catalysed reaction is aculene B + 2-oxoglutarate + O2 = aculene A + succinate + CO2 + H2O. It participates in secondary metabolite biosynthesis. Dioxygenase; part of the gene cluster that mediates the biosynthesis of aculenes, a unique type of norsesquiterpenes that contain a nordaucane skeleton linked to an L-proline moiety and are of mixed biosynthetic origin. The pathway begins with the synthesis of dauca-4,7-diene by the terpene cyclase aneC using farnesyl pyrophosphate (FPP) as substrate. The cytochrome P450 monooxygenase aneF then performs the initial oxidation at C-12 of dauca-4,7-diene to yield asperaculane D. Asperaculane D is substrate of the cytochrome P450 monooxygenase aneD for C-10 hydroxylation to yield asperaculane E. The cytochrome P450 monooxygenase aneG then converts asperaculane E into aculene D via C-2 oxidation. The monomodular nonribosomal peptide synthase aneB adenylates L-proline and the thiohydrolase aneE transfers this activated L-proline derivative to aculenes D and C to produce respectively aculenes B and A. The dioxygenase aneA converts aculene D into aculene C, and aculene B into aculene A by introducing the 5,6-alkene moiety. Asperculanes A, B, C and F, as well as 14-prolyl asperculane C, might be shunt products of the pathway. The sequence is that of Dioxygenase aneA from Aspergillus aculeatus (strain ATCC 16872 / CBS 172.66 / WB 5094).